The chain runs to 256 residues: MSLLAAAIPSTSSHFSAPFLPSFRMPRKSLTAPLHRIRRPRPFTVVSSVPDPAAGPVEYTPWLIAGLGNPGNKYYGTRHNVGFEMVDRIAAEEGITMNTIQSKSLLGIGSIGEVPVLVVKPQSYMNYSGEAIGPLAAYYQVPLRHILLIYDDTSLPNGVLRLQKKGGHGRHNGLQNVIEHLDGRREFPRLSIGIGSPPGKMDPRAFLLQKFSSEERVQIDTALEQGVDAVRTLVLKGFSGSTERFNLVQKYKFHRV.

A chloroplast-targeting transit peptide spans 1–45 (MSLLAAAIPSTSSHFSAPFLPSFRMPRKSLTAPLHRIRRPRPFTV). Tyr74 is a binding site for tRNA. Catalysis depends on His79, which acts as the Proton acceptor. TRNA-binding residues include Tyr124, Asn126, and Asn172.

The protein belongs to the PTH family. CRS2 subfamily. As to quaternary structure, interacts with CAF1 and CAF2. Part of large ribonucleo-protein complexes that include group IIB introns and either CAF1 or CAF2.

It is found in the plastid. The protein localises to the chloroplast stroma. Required for the splicing of group IIB introns in chloroplasts. Forms complexes with either CAF1 or CAF2 which, in turn, interact with RNA and confer intron specificity of the splicing particles. Has no peptidyl-tRNA hydrolase activity. In Zea mays (Maize), this protein is Chloroplastic group IIB intron splicing facilitator CRS2, chloroplastic (CRS2).